A 225-amino-acid polypeptide reads, in one-letter code: tRNA (guanine-N(1)-)-methyltransferase (225 aa).

Residues Gly112 and 132-137 each bind S-adenosyl-L-methionine; that span reads IGDYVL.

It belongs to the RNA methyltransferase TrmD family. In terms of assembly, homodimer.

The protein localises to the cytoplasm. The enzyme catalyses guanosine(37) in tRNA + S-adenosyl-L-methionine = N(1)-methylguanosine(37) in tRNA + S-adenosyl-L-homocysteine + H(+). Functionally, specifically methylates guanosine-37 in various tRNAs. The sequence is that of tRNA (guanine-N(1)-)-methyltransferase from Porphyromonas gingivalis (strain ATCC 33277 / DSM 20709 / CIP 103683 / JCM 12257 / NCTC 11834 / 2561).